Here is a 236-residue protein sequence, read N- to C-terminus: 2-C-methyl-D-erythritol 4-phosphate cytidylyltransferase (236 aa).

Belongs to the IspD/TarI cytidylyltransferase family. IspD subfamily. As to quaternary structure, homodimer.

The enzyme catalyses 2-C-methyl-D-erythritol 4-phosphate + CTP + H(+) = 4-CDP-2-C-methyl-D-erythritol + diphosphate. It functions in the pathway isoprenoid biosynthesis; isopentenyl diphosphate biosynthesis via DXP pathway; isopentenyl diphosphate from 1-deoxy-D-xylulose 5-phosphate: step 2/6. Its function is as follows. Catalyzes the formation of 4-diphosphocytidyl-2-C-methyl-D-erythritol from CTP and 2-C-methyl-D-erythritol 4-phosphate (MEP). In Escherichia coli O17:K52:H18 (strain UMN026 / ExPEC), this protein is 2-C-methyl-D-erythritol 4-phosphate cytidylyltransferase.